The following is a 462-amino-acid chain: GTPase Der (462 aa).

EngA-type G domains are found at residues 3–166 (PVIA…ITEM) and 175–348 (IKIA…HSAI). Residues 9-16 (GRPNVGKS), 56-60 (DTGGI), 118-121 (NKTD), 181-188 (GRPNVGKS), 228-232 (DTAGV), and 293-296 (NKWD) each bind GTP. One can recognise a KH-like domain in the interval 349–433 (QSFSTPKLTR…PLKIEFKGGQ (85 aa)).

It belongs to the TRAFAC class TrmE-Era-EngA-EngB-Septin-like GTPase superfamily. EngA (Der) GTPase family. In terms of assembly, associates with the 50S ribosomal subunit.

In terms of biological role, GTPase that plays an essential role in the late steps of ribosome biogenesis. The polypeptide is GTPase Der (Legionella pneumophila (strain Lens)).